A 443-amino-acid polypeptide reads, in one-letter code: Serine/threonine-protein phosphatase 2A 55 kDa regulatory subunit B beta isoform (443 aa).

4 WD repeats span residues T22–V61, E87–E128, A171–N209, and E220–R260. Phosphoserine is present on S275. 3 WD repeats span residues E279 to E317, E334 to L375, and D410 to V442. Y295 bears the Phosphotyrosine mark. The residue at position 298 (T298) is a Phosphothreonine.

It belongs to the phosphatase 2A regulatory subunit B family. In terms of assembly, PP2A consists of a common heterodimeric core enzyme, composed of a 36 kDa catalytic subunit (subunit C) and a 65 kDa constant regulatory subunit (PR65 or subunit A), that associates with a variety of regulatory subunits. Proteins that associate with the core dimer include three families of regulatory subunits B (the R2/B/PR55/B55, R3/B''/PR72/PR130/PR59 and R5/B'/B56 families), the 48 kDa variable regulatory subunit, viral proteins, and cell signaling molecules. Interacts with IER5 (via N- and C-terminal regions). Interacts with TOMM22. Expressed in the brain. Isoform 1 and isoform 2 are expressed in the forbrain. Isoform 1 is more strongly expressed than isoform 2 in the olfactory bulb. Isoform 1 and isoform 2 are weakly expressed in the cerebellum. Isoform 1 is expressed in the testis. Isoform 2 expression is undetectable at birth rising to adult level at day 14.

It is found in the cytoplasm. The protein resides in the cytoskeleton. Its subcellular location is the membrane. The protein localises to the mitochondrion. It localises to the mitochondrion outer membrane. The B regulatory subunit might modulate substrate selectivity and catalytic activity, and might also direct the localization of the catalytic enzyme to a particular subcellular compartment. Within the PP2A holoenzyme complex, isoform 2 is required to promote proapoptotic activity. Isoform 2 regulates neuronal survival through the mitochondrial fission and fusion balance. The sequence is that of Serine/threonine-protein phosphatase 2A 55 kDa regulatory subunit B beta isoform (Ppp2r2b) from Rattus norvegicus (Rat).